Reading from the N-terminus, the 343-residue chain is MTDEPLVLGIETSCDETGVGVVRGRTLLANEIASSVDLHARFGGVVPEVASRAHLEALVPTMHRALEKAGLRLADVDAIAVTAGPGLAGTLLVGVAAAKAYALALGKPLFGVNHLAAHVAVDILEHGPLPRPCVALLVSGGHSSLLLVEDVTGTVRPLGSTVDDAAGEAFDKVARVLGLPFPGGPPIDRAAQEGDPQFVAFPRGKADDGTFDFSFAGLKTAVARWVEKRERDGEPVPVADVAAAFQEAVADVLTAKAVAACRTYGVGDLLIGGGVAANSRLRSLAAERCEAAGIRLRVPRPGLCTDNGAMVAALGACLIKAGRTPSEPEFPADSSLPITEVLV.

Residues His114 and His118 each contribute to the Fe cation site. Substrate contacts are provided by residues 137 to 141 (LVSGG), Asp171, Gly184, Asp188, and Asn278. Asp306 provides a ligand contact to Fe cation.

The protein belongs to the KAE1 / TsaD family. Requires Fe(2+) as cofactor.

The protein resides in the cytoplasm. The catalysed reaction is L-threonylcarbamoyladenylate + adenosine(37) in tRNA = N(6)-L-threonylcarbamoyladenosine(37) in tRNA + AMP + H(+). Its function is as follows. Required for the formation of a threonylcarbamoyl group on adenosine at position 37 (t(6)A37) in tRNAs that read codons beginning with adenine. Is involved in the transfer of the threonylcarbamoyl moiety of threonylcarbamoyl-AMP (TC-AMP) to the N6 group of A37, together with TsaE and TsaB. TsaD likely plays a direct catalytic role in this reaction. The chain is tRNA N6-adenosine threonylcarbamoyltransferase from Acidothermus cellulolyticus (strain ATCC 43068 / DSM 8971 / 11B).